The sequence spans 364 residues: Paraneoplastic antigen Ma2 (364 aa).

Position 2 is an N-acetylalanine (Ala2). Positions 335 to 351 are enriched in acidic residues; sequence EEEEASFENESIEEPEE. Residues 335–364 are disordered; sequence EEEEASFENESIEEPEERDGYGRWNHEGDD. Residues 352–364 are compositionally biased toward basic and acidic residues; the sequence is RDGYGRWNHEGDD.

The protein belongs to the PNMA family. As to expression, brain-specific. In some cancer patients, specifically expressed by testicular tumor cells.

The protein resides in the nucleus. It localises to the nucleolus. The protein is Paraneoplastic antigen Ma2 (PNMA2) of Homo sapiens (Human).